Consider the following 468-residue polypeptide: MVKPVIFAICLGVLLSKALSIPLRSFADIELIGSQKSLFPFLGGSAPYFSFPANYGIPTDIPEGCRLTQVQMIGRHGERYPTRSEAKDIFEVWYKISNYTGKYEGSLSFLNNGYEFFIPDESLLEMETTLQNSIDVLNPYTGEMNAKRHAREFLAKYGKLMENCTNFPIFTTNSKRIYDTAQYFAEALGDGFNISLQTLSENSSSGANTLAAKSSCPNWNSNANNDILMSYSRDYLENISDRLNDENKGLNLSRKDAAALFSWCAFELNAKGYSNICDIFSAAELIHYSYETDLTSFYQNGPGYKLIKSIGANLFNATVKLIRQSAHLDQKVWLSFTHDTDILNYLTTAGLIDDTRNLTTNHVPFRDHSYHRSWYIPQGARVYTEKFQCSNDSYVRYVVNDAVVPIESCSSGPGFSCEEGTFYEYAKDRLRGVSFYEDCDVSKVSKEKELTFYWDWNTTRYNASLVNQ.

Residues M1 to S20 form the signal peptide. H76 serves as the catalytic Nucleophile. N-linked (GlcNAc...) asparagine glycans are attached at residues N98, N163, N193, N202, N238, N251, and N316. D339 (proton donor) is an active-site residue. N357, N391, N457, and N462 each carry an N-linked (GlcNAc...) asparagine glycan.

Belongs to the histidine acid phosphatase family.

It carries out the reaction a phosphate monoester + H2O = an alcohol + phosphate. The sequence is that of Probable acid phosphatase DIA3 (DIA3) from Saccharomyces cerevisiae (strain ATCC 204508 / S288c) (Baker's yeast).